The primary structure comprises 202 residues: Dephospho-CoA kinase (202 aa).

A DPCK domain is found at 3–202; sequence TIGITGGIGS…TKRPNPPDRL (200 aa). 11–16 is a binding site for ATP; it reads GSGKSV. Residues 138-161 form a disordered region; the sequence is RAMARDGSSAETMRQRMLSQEREQ.

Belongs to the CoaE family.

The protein localises to the cytoplasm. It catalyses the reaction 3'-dephospho-CoA + ATP = ADP + CoA + H(+). The protein operates within cofactor biosynthesis; coenzyme A biosynthesis; CoA from (R)-pantothenate: step 5/5. In terms of biological role, catalyzes the phosphorylation of the 3'-hydroxyl group of dephosphocoenzyme A to form coenzyme A. The protein is Dephospho-CoA kinase of Porphyromonas gingivalis (strain ATCC BAA-308 / W83).